The following is a 208-amino-acid chain: FMN-dependent NADH:quinone oxidoreductase 1 (208 aa).

17–19 (SVS) contributes to the FMN binding site.

It belongs to the azoreductase type 1 family. As to quaternary structure, homodimer. The cofactor is FMN.

The enzyme catalyses 2 a quinone + NADH + H(+) = 2 a 1,4-benzosemiquinone + NAD(+). The catalysed reaction is N,N-dimethyl-1,4-phenylenediamine + anthranilate + 2 NAD(+) = 2-(4-dimethylaminophenyl)diazenylbenzoate + 2 NADH + 2 H(+). Its function is as follows. Quinone reductase that provides resistance to thiol-specific stress caused by electrophilic quinones. In terms of biological role, also exhibits azoreductase activity. Catalyzes the reductive cleavage of the azo bond in aromatic azo compounds to the corresponding amines. The sequence is that of FMN-dependent NADH:quinone oxidoreductase 1 from Listeria innocua serovar 6a (strain ATCC BAA-680 / CLIP 11262).